The chain runs to 367 residues: Leu/Ile/Val-binding protein (367 aa).

An N-terminal signal peptide occupies residues 1–23 (MNIKGKALLAGCIALAFSNMALA). Residues cysteine 76 and cysteine 101 are joined by a disulfide bond.

This sequence belongs to the leucine-binding protein family.

Its subcellular location is the periplasm. Functionally, this protein is a component of the leucine, isoleucine, valine, (threonine) transport system, which is one of the two periplasmic binding protein-dependent transport systems of the high-affinity transport of the branched-chain amino acids. The sequence is that of Leu/Ile/Val-binding protein (livJ) from Escherichia coli O157:H7.